Reading from the N-terminus, the 298-residue chain is Cyclin-C (298 aa).

Residues 46–162 form the Cyclin N-terminal domain; sequence NFITAVATEC…ILDCCLVVHH (117 aa). The disordered stretch occupies residues 278-298; it reads KLPKPNTPIPPPQQQQSSYHM.

It belongs to the cyclin family. Cyclin C subfamily. In terms of assembly, component of the Mediator complex.

The protein localises to the nucleus. Functionally, component of the Mediator complex, a coactivator involved in regulated gene transcription of nearly all RNA polymerase II-dependent genes. Mediator functions as a bridge to convey information from gene-specific regulatory proteins to the basal RNA polymerase II transcription machinery. Mediator is recruited to promoters by direct interactions with regulatory proteins and serves as a scaffold for the assembly of a functional preinitiation complex with RNA polymerase II and the general transcription factors. Binds to and activates cyclin-dependent kinase cdk-8 that phosphorylates the CTD (C-terminal domain) of the large subunit of RNA polymerase II (RNAp II), which may inhibit the formation of a transcription initiation complex. This Caenorhabditis briggsae protein is Cyclin-C (cic-1).